We begin with the raw amino-acid sequence, 798 residues long: Serine/threonine-protein kinase SIK2 (798 aa).

In terms of domain architecture, Protein kinase spans 26–277 (YDIERTLGKG…ISQIKQHKWM (252 aa)). ATP is bound by residues 32-40 (LGKGNFAVV) and K55. The active-site Proton acceptor is the D148. T181 carries the post-translational modification Phosphothreonine. Phosphoserine is present on S185. The UBA domain occupies 302–342 (DYNEQVLGIMQTLGIDRQRTVESLQNSSYNHFAAIYYLLLE). Residues 351–361 (QLSSRPATGRQ) show a composition bias toward polar residues. The segment at 351-382 (QLSSRPATGRQQRPRSSEISNAEMPQDSLTSE) is disordered. At S575 the chain carries Phosphoserine. The segment at 672–691 (ACPQTSQTSATNGLPPSDSA) is disordered. Residues 673–685 (CPQTSQTSATNGL) show a composition bias toward polar residues.

The protein belongs to the protein kinase superfamily. CAMK Ser/Thr protein kinase family. SNF1 subfamily. It depends on Mg(2+) as a cofactor. In terms of processing, phosphorylated at Thr-181 by STK11/LKB1 in complex with STE20-related adapter-alpha (STRADA) pseudo kinase and CAB39. As to expression, ubiquitously expressed in embryonic tissue.

Its subcellular location is the cytoplasm. The catalysed reaction is L-seryl-[protein] + ATP = O-phospho-L-seryl-[protein] + ADP + H(+). It catalyses the reaction L-threonyl-[protein] + ATP = O-phospho-L-threonyl-[protein] + ADP + H(+). With respect to regulation, activated by phosphorylation on Thr-181. Its function is as follows. Phosphorylates IRS1 in insulin-stimulated adipocytes, potentially modulating the efficiency of insulin signal transduction. Inhibits CREB activity by phosphorylating and repressing the CREB-specific coactivators, CRTC1-3. The chain is Serine/threonine-protein kinase SIK2 (SIK2) from Gallus gallus (Chicken).